The chain runs to 259 residues: UPF0246 protein VFMJ11_2214 (259 aa).

Belongs to the UPF0246 family.

This Aliivibrio fischeri (strain MJ11) (Vibrio fischeri) protein is UPF0246 protein VFMJ11_2214.